The chain runs to 338 residues: Ribosomal RNA small subunit methyltransferase H (338 aa).

S-adenosyl-L-methionine is bound by residues glycine 46–tyrosine 48, aspartate 63, phenylalanine 90, aspartate 106, and glutamine 113.

This sequence belongs to the methyltransferase superfamily. RsmH family.

It is found in the cytoplasm. The catalysed reaction is cytidine(1402) in 16S rRNA + S-adenosyl-L-methionine = N(4)-methylcytidine(1402) in 16S rRNA + S-adenosyl-L-homocysteine + H(+). Its function is as follows. Specifically methylates the N4 position of cytidine in position 1402 (C1402) of 16S rRNA. This is Ribosomal RNA small subunit methyltransferase H from Mesorhizobium japonicum (strain LMG 29417 / CECT 9101 / MAFF 303099) (Mesorhizobium loti (strain MAFF 303099)).